A 560-amino-acid chain; its full sequence is Nuclear hormone receptor family member nhr-8 (560 aa).

The disordered stretch occupies residues 1-21 (MPSSSPSMDESRRSAVPPKEP). The nuclear receptor DNA-binding region spans 23 to 98 (GRICTVCSDR…VGMNSEWLND (76 aa)). 2 NR C4-type zinc fingers span residues 26–46 (CTVCSDRANGYNFGVLTCESC) and 62–86 (CPFSDSCQITSASRKFCQACRLNKC). One can recognise an NR LBD domain in the interval 336–560 (DEITLLEELH…PLIRELCSFE (225 aa)).

This sequence belongs to the nuclear hormone receptor family.

The protein localises to the nucleus. Functionally, orphan nuclear receptor. The chain is Nuclear hormone receptor family member nhr-8 (nhr-8) from Caenorhabditis elegans.